Consider the following 813-residue polypeptide: Receptor-like protein 48 (813 aa).

An N-terminal signal peptide occupies residues 1-30 (MHSCSERRMMTVIWSLCLIFCLSNSILAIA). Over 31 to 786 (KDLCLPDQRD…EDEEKEEKNQ (756 aa)) the chain is Extracellular. N-linked (GlcNAc...) asparagine glycosylation is found at Asn69, Asn105, and Asn123. 3 LRR repeats span residues 111-134 (LQHL…SIGN), 136-159 (KYLR…LGSL), and 160-182 (SYLT…SGGN). Asn195 and Asn216 each carry an N-linked (GlcNAc...) asparagine glycan. LRR repeat units follow at residues 196–219 (LSSV…NMSS), 220–244 (LSKL…LFMI), 245–260 (PSLN…NISS), 261–285 (HSEL…LSKL), 288–310 (LRDL…IFLH), 311–335 (LKSL…FFSH), 336–359 (LMSL…SFPS), 361–381 (TGTL…LENQ), 382–405 (TSLF…LWRL), 406–432 (PTLS…IYSF), 434–450 (ASDN…VCEL), 451–473 (VSLN…CFEN), 475–498 (KTIS…IISE), 500–521 (LTSL…LIKC), 523–544 (DLEF…WLRS), 545–571 (LSNL…SLSF), 572–595 (PKLR…YFAG), 642–666 (FTIY…IGIL), 667–690 (KELI…LSNL), 691–714 (SNLQ…LGKL), and 716–739 (FLEW…QIQS). Asn248 and Asn257 each carry an N-linked (GlcNAc...) asparagine glycan. N-linked (GlcNAc...) asparagine glycosylation is present at Asn380. Asn484 carries an N-linked (GlcNAc...) asparagine glycan. N-linked (GlcNAc...) asparagine glycosylation is found at Asn673 and Asn689. N-linked (GlcNAc...) asparagine glycans are attached at residues Asn721 and Asn741. The disordered stretch occupies residues 756 to 785 (FLNKCGGEEEEEEEATKQEEDEDEEKEEKN). A compositionally biased stretch (acidic residues) spans 763 to 781 (EEEEEEEATKQEEDEDEEK). A helical transmembrane segment spans residues 787–807 (VFSWIAAAIGYVPGVFCGLTI). Residues 808–813 (AHILTS) lie on the Cytoplasmic side of the membrane.

It belongs to the RLP family.

It is found in the cell membrane. In terms of biological role, plays a role in root hair development. The chain is Receptor-like protein 48 from Arabidopsis thaliana (Mouse-ear cress).